The sequence spans 227 residues: 6-phosphogluconolactonase (227 aa).

This sequence belongs to the glucosamine/galactosamine-6-phosphate isomerase family. 6-phosphogluconolactonase subfamily.

It catalyses the reaction 6-phospho-D-glucono-1,5-lactone + H2O = 6-phospho-D-gluconate + H(+). Its pathway is carbohydrate degradation; pentose phosphate pathway; D-ribulose 5-phosphate from D-glucose 6-phosphate (oxidative stage): step 2/3. In terms of biological role, hydrolysis of 6-phosphogluconolactone to 6-phosphogluconate. The sequence is that of 6-phosphogluconolactonase (pgl) from Helicobacter pylori (strain ATCC 700392 / 26695) (Campylobacter pylori).